The following is a 346-amino-acid chain: Galanin receptor type 1 (346 aa).

The Extracellular portion of the chain corresponds to 1 to 33; sequence MELAPVNLSEGNGSDPEPPAEPRPLFGIGVENF. N-linked (GlcNAc...) asparagine glycosylation is found at Asn-7 and Asn-12. A helical transmembrane segment spans residues 34–54; the sequence is ITLVVFGLIFAMGVLGNSLVI. At 55 to 69 the chain is on the cytoplasmic side; the sequence is TVLARSKPGKPRSTT. Residues 70 to 90 form a helical membrane-spanning segment; it reads NLFILNLSIADLAYLLFCIPF. The Extracellular segment spans residues 91–108; that stretch reads QATVYALPTWVLGAFICK. An intrachain disulfide couples Cys-107 to Cys-185. A helical membrane pass occupies residues 109–130; that stretch reads FIHYFFTVSMLVSIFTLAAMSV. Residues 131–150 are Cytoplasmic-facing; it reads DRYVAIVHSRRSSSLRVSRN. The chain crosses the membrane as a helical span at residues 151–171; the sequence is ALLGVGFIWALSIAMASPVAY. The Extracellular segment spans residues 172–196; sequence YQRLFHRDSNQTFCWEHWPNQLHKK. An N-linked (GlcNAc...) asparagine glycan is attached at Asn-181. Residues 197-217 form a helical membrane-spanning segment; that stretch reads AYVVCTFVFGYLLPLLLICFC. Over 218–246 the chain is Cytoplasmic; sequence YAKVLNHLHKKLKNMSKKSEASKKKTAQT. A helical membrane pass occupies residues 247 to 267; that stretch reads VLVVVVVFGISWLPHHVIHLW. Topologically, residues 268-269 are extracellular; it reads AE. Residues 270 to 290 traverse the membrane as a helical segment; it reads FGAFPLTPASFFFRITAHCLA. The Cytoplasmic portion of the chain corresponds to 291-346; that stretch reads YSNSSVNPIIYAFLSENFRKAYKQVFKCRVCNESPHGDAKEKNRIDTPPSTNCTHV. The S-palmitoyl cysteine moiety is linked to residue Cys-318. Residues 326 to 335 show a composition bias toward basic and acidic residues; it reads HGDAKEKNRI. The interval 326 to 346 is disordered; that stretch reads HGDAKEKNRIDTPPSTNCTHV.

It belongs to the G-protein coupled receptor 1 family. In terms of assembly, interacts with GRP39 AND HTR1A. Three cysteine residues are found in the C-terminus, at least one of which may be palmitoylated. In terms of tissue distribution, spinal cord, small intestine, Rin14B insulinoma cells and several brain regions, particularly ventral hippocampus, amygdala, supraoptic nucleus, hypothalamus, thalamus, lateral parabrachial nucleus and locus coeruleus.

It is found in the cell membrane. Functionally, receptor for the hormone galanin. The activity of this receptor is mediated by G proteins that inhibit adenylate cyclase activity. The polypeptide is Galanin receptor type 1 (Galr1) (Rattus norvegicus (Rat)).